We begin with the raw amino-acid sequence, 980 residues long: Peroxisomal ATPase PEX6 (980 aa).

Arg119 bears the Omega-N-methylarginine mark. ATP is bound by residues 470-477 and 744-751; these read GPPGSGKT and GPPGTGKT.

The protein belongs to the AAA ATPase family. In terms of assembly, interacts with PEX1; forming the PEX1-PEX6 AAA ATPase complex, which is composed of a heterohexamer formed by a trimer of PEX1-PEX6 dimers. Interacts with PEX26; interaction is direct and promotes recruitment to peroxisomal membranes. Interacts with ZFAND6.

The protein localises to the cytoplasm. It is found in the cytosol. The protein resides in the peroxisome membrane. Its subcellular location is the cell projection. It localises to the cilium. The protein localises to the photoreceptor outer segment. The enzyme catalyses ATP + H2O = ADP + phosphate + H(+). Component of the PEX1-PEX6 AAA ATPase complex, a protein dislocase complex that mediates the ATP-dependent extraction of the PEX5 receptor from peroxisomal membranes, an essential step for PEX5 recycling. Specifically recognizes PEX5 monoubiquitinated at 'Cys-11', and pulls it out of the peroxisome lumen through the PEX2-PEX10-PEX12 retrotranslocation channel. Extraction by the PEX1-PEX6 AAA ATPase complex is accompanied by unfolding of the TPR repeats and release of bound cargo from PEX5. This chain is Peroxisomal ATPase PEX6, found in Cricetulus griseus (Chinese hamster).